The chain runs to 502 residues: Cytochrome P450 71A1 (502 aa).

Residues 7–21 traverse the membrane as a helical segment; the sequence is LLFLAIALTFFLLKL. A heme-binding site is contributed by Cys-443.

It belongs to the cytochrome P450 family. Requires heme as cofactor. Mesocarp.

It localises to the microsome membrane. It is found in the endoplasmic reticulum membrane. Its function is as follows. Involved in the metabolism of compounds associated with the development of flavor in the ripening fruit process, possibly by acting as trans-cinnamic acid 4-hydrolase. In Persea americana (Avocado), this protein is Cytochrome P450 71A1 (CYP71A1).